Here is a 975-residue protein sequence, read N- to C-terminus: Translation initiation factor IF-2 (975 aa).

The span at 48–63 (DHLRKSHGATDGDKRK) shows a compositional bias: basic and acidic residues. Disordered stretches follow at residues 48–84 (DHLR…GKAR) and 98–388 (KRDD…QAPT). A compositionally biased stretch (low complexity) spans 104–115 (ETGADQAQAQTD). Residues 120–177 (AELKRREEEARREAELLEKQAQELRERQERLEREEAERRAREEAAEAERRRAEEEAAA) show a composition bias toward basic and acidic residues. Residues 178-211 (KRAAAAQAEAAQQAAAAREQAQRAQSEPAEQSAQ) show a composition bias toward low complexity. A compositionally biased stretch (basic and acidic residues) spans 212–263 (DEARAAAERAAQREAAKKAEDAAREAADKARAEQEEIRKRREAAEAEARAIR). Low complexity predominate over residues 302 to 330 (KPAGEAAAARPAAKKPASGAPAPAAAPAG). The segment covering 359 to 372 (SSGGVDRGWRGGPK) has biased composition (gly residues). The tr-type G domain occupies 475 to 644 (PRPPVVTVMG…LLQAEVLELK (170 aa)). Residues 484 to 491 (GHVDHGKT) are G1. Residue 484–491 (GHVDHGKT) participates in GTP binding. The segment at 509–513 (GITQH) is G2. The tract at residues 530–533 (DTPG) is G3. GTP is bound by residues 530-534 (DTPGH) and 584-587 (NKID). A G4 region spans residues 584–587 (NKID). Positions 620 to 622 (SAK) are G5.

It belongs to the TRAFAC class translation factor GTPase superfamily. Classic translation factor GTPase family. IF-2 subfamily.

It is found in the cytoplasm. One of the essential components for the initiation of protein synthesis. Protects formylmethionyl-tRNA from spontaneous hydrolysis and promotes its binding to the 30S ribosomal subunits. Also involved in the hydrolysis of GTP during the formation of the 70S ribosomal complex. In Burkholderia mallei (strain NCTC 10247), this protein is Translation initiation factor IF-2.